Consider the following 372-residue polypeptide: MKYDLIIIGSGSVGAAAGYYATRAGLNVLMTDAHMPPHQHGSHHGDTRLIRHAYGEGEKYVPLVLRAQMLWDELSRHNEDDPIFVRSGVINLGPADSAFLANVAHSAEQWQLNVEKLDAQGIMARWPEIRVPDNYIGLFETDSGFLRSELAIKTWIQLAKEAGCAQLFNCPVTAIRHDDDGVTIETADGEYQAKKAIVCAGTWVKDLLPELPVQPVRKVFAWYQADGRYSVKNKFPAFTGELPNGDQYYGFPAENDALKIGKHNGGQVIHSADERVPFAEVVSDGSEAFPFLRNVLPGIGCCLYGAACTYDNSPDEDFIIDTLPAHDNTLLITGLSGHGFKFASVLGEIAADFAQDKKSDFDLTPFRLSRFQ.

4–34 (DLIIIGSGSVGAAAGYYATRAGLNVLMTDAH) is a binding site for FAD. Residue cysteine 308 is modified to S-8alpha-FAD cysteine.

Belongs to the MSOX/MTOX family. MTOX subfamily. As to quaternary structure, monomer. FAD serves as cofactor.

The enzyme catalyses N(alpha)-methyl-L-tryptophan + O2 + H2O = L-tryptophan + formaldehyde + H2O2. Catalyzes the oxidative demethylation of N-methyl-L-tryptophan. In Escherichia coli O6:H1 (strain CFT073 / ATCC 700928 / UPEC), this protein is N-methyl-L-tryptophan oxidase.